A 326-amino-acid polypeptide reads, in one-letter code: Bifunctional pinoresinol-lariciresinol reductase (326 aa).

Residues 25 to 31 (GGTGYLG), Arg-50, and Lys-59 contribute to the NADP(+) site. Lys-153 serves as the catalytic Proton acceptor. Residue Arg-157 participates in NADP(+) binding. Substrate is bound at residue His-285.

Belongs to the NmrA-type oxidoreductase family. Isoflavone reductase subfamily. Dimer.

It catalyses the reaction (+)-lariciresinol + NADP(+) = (+)-pinoresinol + NADPH + H(+). It carries out the reaction (-)-secoisolariciresinol + NADP(+) = (+)-lariciresinol + NADPH + H(+). Functionally, reductase involved in lignan biosynthesis. Catalyzes the enantioselective conversion of (+)-pinoresinol into (+)-lariciresinol and of (+)-lariciresinol into (-)-secoisolariciresinol. Abstracts the 4R-hydride from the NADPH cofactor during catalysis. The polypeptide is Bifunctional pinoresinol-lariciresinol reductase (PLR1) (Linum album (Flax)).